Reading from the N-terminus, the 484-residue chain is Sperm motility kinase Tcr mutant form (484 aa).

Positions 8-256 (YEMLETIGQG…VAEVMVHPWV (249 aa)) constitute a Protein kinase domain. ATP-binding positions include 14–22 (IGQGGCAQV) and Lys37. Asp127 acts as the Proton acceptor in catalysis. Disordered stretches follow at residues 355–400 (EPTG…TMDQ) and 426–446 (STEGHISTSAEDKPVHSRGWP). Polar residues predominate over residues 391–400 (PINTTPTMDQ).

It belongs to the protein kinase superfamily. Tyr protein kinase family. Smok subfamily. Testis-specific. Expressed in the testis from 22 days postpartum (22 dpp). Expressed late in spermiogenesis, only in Tcr-containing t-haplotypes.

It catalyses the reaction L-seryl-[protein] + ATP = O-phospho-L-seryl-[protein] + ADP + H(+). The catalysed reaction is L-threonyl-[protein] + ATP = O-phospho-L-threonyl-[protein] + ADP + H(+). Functionally, while the main function of Smoks is to control sperm motility, the role of Smok-Tcr, with reduced kinase activity, is to counterbalance a signaling impairment caused by the distorter/sterility loci, giving t-sperm an advantage in reaching the oocytes. Transmission ratio distortion also called segregation distortion is the name given to the phenomenon above-mentioned. Being associated with the T-complex, it allows males heterozygous for a complete t-haplotype to preferentially transmit the t-haplotype chromosome. This chain is Sperm motility kinase Tcr mutant form (Smoktcr), found in Mus musculus (Mouse).